We begin with the raw amino-acid sequence, 458 residues long: Bifunctional protein GlmU (458 aa).

Residues 1 to 228 (MHPKLDILIL…DWEVLGVNSK (228 aa)) form a pyrophosphorylase region. UDP-N-acetyl-alpha-D-glucosamine-binding positions include 10-13 (LAAG), K24, Q75, 80-81 (GT), 102-104 (YGD), G139, E153, N168, and N226. D104 is a binding site for Mg(2+). Position 226 (N226) interacts with Mg(2+). The linker stretch occupies residues 229–249 (AQLAELERIHQNEVAQRLLAD). The N-acetyltransferase stretch occupies residues 250–458 (GVTLMDPARL…KRPIKPKKEG (209 aa)). UDP-N-acetyl-alpha-D-glucosamine-binding residues include R332 and K350. H362 (proton acceptor) is an active-site residue. 2 residues coordinate UDP-N-acetyl-alpha-D-glucosamine: Y365 and N376. Residues A379, 385-386 (NY), S404, A422, and R439 contribute to the acetyl-CoA site.

This sequence in the N-terminal section; belongs to the N-acetylglucosamine-1-phosphate uridyltransferase family. It in the C-terminal section; belongs to the transferase hexapeptide repeat family. As to quaternary structure, homotrimer. It depends on Mg(2+) as a cofactor.

The protein localises to the cytoplasm. It carries out the reaction alpha-D-glucosamine 1-phosphate + acetyl-CoA = N-acetyl-alpha-D-glucosamine 1-phosphate + CoA + H(+). The enzyme catalyses N-acetyl-alpha-D-glucosamine 1-phosphate + UTP + H(+) = UDP-N-acetyl-alpha-D-glucosamine + diphosphate. Its pathway is nucleotide-sugar biosynthesis; UDP-N-acetyl-alpha-D-glucosamine biosynthesis; N-acetyl-alpha-D-glucosamine 1-phosphate from alpha-D-glucosamine 6-phosphate (route II): step 2/2. It participates in nucleotide-sugar biosynthesis; UDP-N-acetyl-alpha-D-glucosamine biosynthesis; UDP-N-acetyl-alpha-D-glucosamine from N-acetyl-alpha-D-glucosamine 1-phosphate: step 1/1. It functions in the pathway bacterial outer membrane biogenesis; LPS lipid A biosynthesis. Functionally, catalyzes the last two sequential reactions in the de novo biosynthetic pathway for UDP-N-acetylglucosamine (UDP-GlcNAc). The C-terminal domain catalyzes the transfer of acetyl group from acetyl coenzyme A to glucosamine-1-phosphate (GlcN-1-P) to produce N-acetylglucosamine-1-phosphate (GlcNAc-1-P), which is converted into UDP-GlcNAc by the transfer of uridine 5-monophosphate (from uridine 5-triphosphate), a reaction catalyzed by the N-terminal domain. The polypeptide is Bifunctional protein GlmU (Thiobacillus denitrificans (strain ATCC 25259 / T1)).